The primary structure comprises 150 residues: N-alpha-acetyltransferase 30 (150 aa).

The N-acetyltransferase domain occupies 2-150 (VTIVPYSHQY…DAFRYILYPN (149 aa)).

Belongs to the acetyltransferase family. MAK3 subfamily.

It localises to the cytoplasm. Its subcellular location is the nucleus. The enzyme catalyses N-terminal L-methionyl-L-leucyl-[protein] + acetyl-CoA = N-terminal N(alpha)-acetyl-L-methionyl-L-leucyl-[protein] + CoA + H(+). It catalyses the reaction N-terminal L-methionyl-L-isoleucyl-[protein] + acetyl-CoA = N-terminal N(alpha)-acetyl-L-methionyl-L-isoleucyl-[protein] + CoA + H(+). The catalysed reaction is N-terminal L-methionyl-L-phenylalanyl-[protein] + acetyl-CoA = N-terminal N(alpha)-acetyl-L-methionyl-L-phenylalanyl-[protein] + CoA + H(+). It carries out the reaction N-terminal L-methionyl-L-tryptophyl-[protein] + acetyl-CoA = N-terminal N(alpha)-acetyl-L-methionyl-L-tryptophyl-[protein] + CoA + H(+). The enzyme catalyses N-terminal L-methionyl-L-tyrosyl-[protein] + acetyl-CoA = N-terminal N(alpha)-acetyl-L-methionyl-L-tyrosyl-[protein] + CoA + H(+). Functionally, catalytic component of the NatC N-terminal acetyltransferase. In Schizosaccharomyces pombe (strain 972 / ATCC 24843) (Fission yeast), this protein is N-alpha-acetyltransferase 30 (naa30).